Here is a 364-residue protein sequence, read N- to C-terminus: Aminomethyltransferase (364 aa).

This sequence belongs to the GcvT family. The glycine cleavage system is composed of four proteins: P, T, L and H.

It carries out the reaction N(6)-[(R)-S(8)-aminomethyldihydrolipoyl]-L-lysyl-[protein] + (6S)-5,6,7,8-tetrahydrofolate = N(6)-[(R)-dihydrolipoyl]-L-lysyl-[protein] + (6R)-5,10-methylene-5,6,7,8-tetrahydrofolate + NH4(+). Its function is as follows. The glycine cleavage system catalyzes the degradation of glycine. The protein is Aminomethyltransferase of Shewanella baltica (strain OS155 / ATCC BAA-1091).